Here is a 62-residue protein sequence, read N- to C-terminus: Large ribosomal subunit protein bL28 (62 aa).

This sequence belongs to the bacterial ribosomal protein bL28 family.

In Thermobifida fusca (strain YX), this protein is Large ribosomal subunit protein bL28.